A 73-amino-acid chain; its full sequence is Disintegrin lutosin (73 aa).

A Disintegrin domain is found at 1 to 73 (EAGEECDCGS…ADCPRNGLYG (73 aa)). Intrachain disulfides connect cysteine 6-cysteine 21, cysteine 8-cysteine 16, cysteine 15-cysteine 38, cysteine 29-cysteine 35, cysteine 34-cysteine 59, and cysteine 47-cysteine 66. The Cell attachment site signature appears at 51 to 53 (RGD).

This sequence belongs to the venom metalloproteinase (M12B) family. P-II subfamily. P-IIa sub-subfamily. As to quaternary structure, monomer (disintegrin). In terms of tissue distribution, expressed by the venom gland.

It localises to the secreted. Inhibits fibrinogen interaction with platelets. Acts by binding to alpha-IIb/beta-3 (ITGA2B/ITGB3) on the platelet surface and inhibits aggregation induced by ADP, thrombin, platelet-activating factor and collagen. The chain is Disintegrin lutosin from Crotalus lutosus (Great basin rattlesnake).